We begin with the raw amino-acid sequence, 455 residues long: P2X purinoceptor 5 (455 aa).

Over 1-34 the chain is Cytoplasmic; the sequence is MGQAAWKGFVLSLFDYKTAKFVVAKSKKVGLLYR. Residues 35-55 form a helical membrane-spanning segment; it reads VLQLIILLYLLIWVFLIKKSY. Over 56-341 the chain is Extracellular; that stretch reads QDIDTSLQSA…SIIPTVINIG (286 aa). ATP is bound by residues lysine 69 and lysine 71. Asparagine 77 carries an N-linked (GlcNAc...) asparagine glycan. 3 disulfides stabilise this stretch: cysteine 118–cysteine 169, cysteine 129–cysteine 152, and cysteine 135–cysteine 163. An N-linked (GlcNAc...) asparagine glycan is attached at asparagine 157. Residue threonine 189 coordinates ATP. The N-linked (GlcNAc...) asparagine glycan is linked to asparagine 202. Intrachain disulfides connect cysteine 220/cysteine 229 and cysteine 263/cysteine 272. ATP is bound by residues asparagine 294, arginine 296, and lysine 314. Residues 342 to 362 traverse the membrane as a helical segment; the sequence is SGLALMGAGAFFCDLVLIYLI. The Cytoplasmic portion of the chain corresponds to 363–455; the sequence is RKSEFYRDKK…QSQILHPVKT (93 aa). A compositionally biased stretch (acidic residues) spans 384-401; the sequence is NVEVEANEMEQERPEDEP. The interval 384–422 is disordered; sequence NVEVEANEMEQERPEDEPLERVRQDEQSQELAQSGRKQN. Residues 412–422 are compositionally biased toward polar residues; it reads QELAQSGRKQN.

The protein belongs to the P2X receptor family. As to quaternary structure, functional P2XRs are organized as homomeric and heteromeric trimers. Homotrimer. Forms heterotrimer with P2RX1. Predominantly expressed in heart but are also present in brain, spinal cord and adrenal gland.

It is found in the cell membrane. It catalyses the reaction Na(+)(in) = Na(+)(out). It carries out the reaction Ca(2+)(in) = Ca(2+)(out). The catalysed reaction is chloride(in) = chloride(out). Its activity is regulated as follows. Activated by ATP. Slowly desensitizing. Not activated by ATP agonist alpha/beta-methylene-ATP. Highly sensitive to the antagonists suramin and PPADS. Functionally, ATP-gated nonselective transmembrane cation channel. Permeable to potassium, sodium and calcium. Unlike other P2RX receptors, the P2X5 receptor is also permeable to chloride. Acts as an important regulator of inflammatory-related bone loss and osteoclast multinucleation. This is P2X purinoceptor 5 (P2rx5) from Rattus norvegicus (Rat).